A 418-amino-acid chain; its full sequence is tRNA-2-methylthio-N(6)-dimethylallyladenosine synthase (418 aa).

The MTTase N-terminal domain occupies 2–118 (PGYYLWTIGC…WREIPEGFIL (117 aa)). Residues C11, C47, C81, C134, C138, and C141 each coordinate [4Fe-4S] cluster. One can recognise a Radical SAM core domain in the interval 120 to 351 (LRPPVSANVT…EDLQKETVGK (232 aa)). Residues 346–414 (KETVGKANAA…PWSLQAKLVN (69 aa)) form the TRAM domain.

This sequence belongs to the methylthiotransferase family. MiaB subfamily. As to quaternary structure, monomer. [4Fe-4S] cluster is required as a cofactor.

Its subcellular location is the cytoplasm. It carries out the reaction N(6)-dimethylallyladenosine(37) in tRNA + (sulfur carrier)-SH + AH2 + 2 S-adenosyl-L-methionine = 2-methylsulfanyl-N(6)-dimethylallyladenosine(37) in tRNA + (sulfur carrier)-H + 5'-deoxyadenosine + L-methionine + A + S-adenosyl-L-homocysteine + 2 H(+). Functionally, catalyzes the methylthiolation of N6-(dimethylallyl)adenosine (i(6)A), leading to the formation of 2-methylthio-N6-(dimethylallyl)adenosine (ms(2)i(6)A) at position 37 in tRNAs that read codons beginning with uridine. This Dehalococcoides mccartyi (strain ATCC BAA-2100 / JCM 16839 / KCTC 5957 / BAV1) protein is tRNA-2-methylthio-N(6)-dimethylallyladenosine synthase.